A 780-amino-acid polypeptide reads, in one-letter code: Cullin-5 (780 aa).

A Phosphoserine modification is found at Ser-34. Phosphothreonine is present on Thr-210. The Cullin neddylation domain occupies 713 to 772; the sequence is LRTRKLYIQIMKMRKKISNAQLQTELVEILKNMFLPQKKMIKEQIEWLIEHKYIRRDESD. Lys-724 is covalently cross-linked (Glycyl lysine isopeptide (Lys-Gly) (interchain with G-Cter in NEDD8)).

The protein belongs to the cullin family. Component of multiple cullin-5-RING E3 ubiquitin-protein ligase complexes (ECS complexes, also named CRL5 complexes) formed of CUL5, Elongin BC (ELOB and ELOC), RNF7/RBX2 and a variable SOCS box domain-containing protein as substrate-specific recognition component. CUL5-containing ECS complexes specifically contain RNF7/RBX2, and not RBX1, as catalytic subunit. Component of the ECS(ASB2) complex with the substrate recognition component ASB2. Component of the ECS(ASB6) complex with the substrate recognition component ASB6. Component of the ECS(ASB7) complex with the substrate recognition component ASB7. Component of the ECS(ASB9) complex with the substrate recognition component ASB9. Component of the ECS(ASB11) complex with the substrate recognition component ASB11. Component of the ECS(ASB12) complex with the substrate recognition component ASB12. Component of the ECS(LRRC41) complex with the substrate recognition component LRRC41. Component of the ECS(SOCS1) complex with the substrate recognition component SOCS1. Component of the ECS(SOCS2) complex with the substrate recognition component SOCS2. Component of the ECS(WSB1) complex with the substrate recognition subunit WSB1. Component of the ECS(SOCS3) complex with the substrate recognition component SOCS3. Component of the ECS(SOCS7) complex with the substrate recognition component SOCS7. Component of the ECS(SPSB1) complex with the substrate recognition component SPSB1. Component of the ECS(SPSB3) complex with the substrate recognition component SPSB3. Component of the ECS(SPSB2) complex with the substrate recognition component SPSB2. Component of the ECS(SPSB4) complex with the substrate recognition component SPSB4. Component of the ECS(RAB40) complex with the substrate recognition subunit RAB40A, RAB40B or RAB40C. Component of the ECS(KLHDC1) complex with the substrate recognition component KLHDC1. Component of the ECS(PCMTD1) complex with the substrate recognition subunit PCMTD1. May also form complexes containing RBX1 and ELOA or VHL; additional evidence is however required to confirm this result in vivo. Interacts (when neddylated) with ARIH2; leading to activate the E3 ligase activity of ARIH2. Interacts with ERCC6; the interaction is induced by DNA damaging agents or inhibitors of RNA polymerase II elongation. Interacts with ELOA (via the BC-box). Interacts (unneddylated form) with DCUN1D1, DCUN1D2, DCUN1D3, DCUN1D4 and DCUN1D5; these interactions promote the cullin neddylation. Post-translationally, neddylated; which enhances the ubiquitination activity of ECS complexes and prevents binding of the inhibitor CAND1. Deneddylated via its interaction with the COP9 signalosome (CSN). As to expression, kidney collecting tubules.

The protein localises to the nucleus. It participates in protein modification; protein ubiquitination. In terms of biological role, core component of multiple cullin-5-RING E3 ubiquitin-protein ligase complexes (ECS complexes, also named CRL5 complexes), which mediate the ubiquitination and subsequent proteasomal degradation of target proteins. Acts a scaffold protein that contributes to catalysis through positioning of the substrate and the ubiquitin-conjugating enzyme. The functional specificity of the E3 ubiquitin-protein ligase complex depends on the variable SOCS box-containing substrate recognition component. Acts as a key regulator of neuron positioning during cortex development: component of various SOCS-containing ECS complexes, such as the ECS(SOCS7) complex, that regulate reelin signaling by mediating ubiquitination and degradation of DAB1. ECS(SOCS1) seems to direct ubiquitination of JAK2. The ECS(SOCS2) complex mediates the ubiquitination and subsequent proteasomal degradation of phosphorylated EPOR and GHR. The ECS(SPSB3) complex catalyzes ubiquitination of nuclear CGAS. ECS(KLHDC1) complex is part of the DesCEND (destruction via C-end degrons) pathway and mediates ubiquitination and degradation of truncated SELENOS selenoprotein produced by failed UGA/Sec decoding, which ends with a glycine. The ECS(ASB9) complex mediates ubiquitination and degradation of CKB. As part of some ECS complex, promotes 'Lys-11'-linked ubiquitination and degradation of BTRC. As part of a multisubunit ECS complex, polyubiquitinates monoubiquitinated POLR2A. As part of the ECS(RAB40C) complex, mediates ANKRD28 ubiquitination and degradation, thereby regulating protein phosphatase 6 (PP6) complex activity and focal adhesion assembly during cell migration. As part of the ECS(RAB40A) complex, mediates RHOU 'Lys-48'-linked ubiquitination and degradation, thus inhibiting focal adhesion disassembly during cell migration. As part of the ECS(RAB40B) complex, mediates LIMA1/EPLIN and RAP2 ubiquitination, thereby regulating actin cytoskeleton dynamics and stress fiber formation during cell migration. May form a cell surface vasopressin receptor. The sequence is that of Cullin-5 (CUL5) from Oryctolagus cuniculus (Rabbit).